Reading from the N-terminus, the 197-residue chain is MVERKASVERNTLETQVKCSINLDGSGKARFDIGVPFLEHMLDQIARHGLIDLDIECKGDLHIDDHHTVEDVGITLGQAFAQAIGDKKGIFRYGHAYVPLDEALSRVVIDFSGRPGLQMHVPYTRATVGGFDVDLFQEFFQGFVNHALVTLHIDNLRGHNTHHQIETVFKAFGRALRMAVTQDERMAGQMPSTKGCL.

This sequence belongs to the imidazoleglycerol-phosphate dehydratase family.

It is found in the cytoplasm. The catalysed reaction is D-erythro-1-(imidazol-4-yl)glycerol 3-phosphate = 3-(imidazol-4-yl)-2-oxopropyl phosphate + H2O. It participates in amino-acid biosynthesis; L-histidine biosynthesis; L-histidine from 5-phospho-alpha-D-ribose 1-diphosphate: step 6/9. The sequence is that of Imidazoleglycerol-phosphate dehydratase from Pseudomonas putida (strain W619).